We begin with the raw amino-acid sequence, 84 residues long: Beta-cardiotoxin CTX14 (84 aa).

The signal sequence occupies residues 1-21; that stretch reads MKTLLLTLVVVTIVCLDLGYT. Cystine bridges form between Cys-24–Cys-43, Cys-36–Cys-61, Cys-65–Cys-76, and Cys-77–Cys-82.

It belongs to the three-finger toxin family. Short-chain subfamily. Aminergic toxin sub-subfamily. As to expression, expressed by the venom gland.

The protein resides in the secreted. Its function is as follows. Acts as a beta-blocker by binding to beta-1 and beta-2 adrenergic receptors (ADRB1 and ADRB2). It dose-dependently decreases the heart rate (bradycardia), whereas conventional cardiotoxins increases it. At 100 mg/kg, intraperitoneal injection into mice provokes labored breathing, impaired locomotion, lack of response to external stimuli, and death (after 30 minutes). This Ophiophagus hannah (King cobra) protein is Beta-cardiotoxin CTX14.